The chain runs to 185 residues: Elongation factor P (185 aa).

The protein belongs to the elongation factor P family.

The protein resides in the cytoplasm. It participates in protein biosynthesis; polypeptide chain elongation. Functionally, involved in peptide bond synthesis. Stimulates efficient translation and peptide-bond synthesis on native or reconstituted 70S ribosomes in vitro. Probably functions indirectly by altering the affinity of the ribosome for aminoacyl-tRNA, thus increasing their reactivity as acceptors for peptidyl transferase. In Nostoc sp. (strain PCC 7120 / SAG 25.82 / UTEX 2576), this protein is Elongation factor P (efp).